The following is a 622-amino-acid chain: Serine/threonine-protein kinase PknB (622 aa).

Residues 1–328 (MTTPPHLSDR…TESDGSIGRW (328 aa)) lie on the Cytoplasmic side of the membrane. One can recognise a Protein kinase domain in the interval 11-273 (YELGDILGFG…TAAEMRADLI (263 aa)). ATP is bound by residues 17–25 (LGFGGMSEV), Lys-40, and 93–95 (EYV). Residue Asp-138 is the Proton acceptor of the active site. ATP-binding positions include 140 to 143 (KPAN) and Asp-156. Positions 143 and 156 each coordinate Mg(2+). Residues Ser-166 and Ser-168 each carry the phosphoserine; by autocatalysis modification. Thr-170, Thr-172, and Thr-308 each carry phosphothreonine; by autocatalysis. A helical transmembrane segment spans residues 329–349 (VAVVAVLAVLTIAIVAAFNTF). Over 350 to 622 (GGNTRDVQVP…DGIITLKFGQ (273 aa)) the chain is Extracellular. PASTA domains follow at residues 352–418 (NTRD…NVST), 419–486 (GPEQ…IVGS), 487–553 (GPET…QVSK), and 554–622 (GNQF…KFGQ). Positions 381–404 (RTLQKPDSTIPPDHVISTEPGANA) are disordered.

The protein belongs to the protein kinase superfamily. Ser/Thr protein kinase family. Homodimer. Autophosphorylated. Dephosphorylated by PstP.

The protein localises to the cell membrane. It carries out the reaction L-seryl-[protein] + ATP = O-phospho-L-seryl-[protein] + ADP + H(+). The enzyme catalyses L-threonyl-[protein] + ATP = O-phospho-L-threonyl-[protein] + ADP + H(+). Protein kinase that regulates many aspects of mycobacterial physiology. Is a key component of a signal transduction pathway that regulates cell growth, cell shape and cell division via phosphorylation of target proteins. This is Serine/threonine-protein kinase PknB (pknB) from Mycobacterium leprae (strain TN).